A 283-amino-acid polypeptide reads, in one-letter code: Pantothenate synthetase (283 aa).

An ATP-binding site is contributed by methionine 31–histidine 38. Histidine 38 (proton donor) is an active-site residue. A (R)-pantoate-binding site is contributed by glutamine 62. Residue glutamine 62 coordinates beta-alanine. Glycine 148 to aspartate 151 provides a ligand contact to ATP. Position 154 (glutamine 154) interacts with (R)-pantoate. ATP is bound by residues valine 177 and lysine 185–arginine 188.

This sequence belongs to the pantothenate synthetase family. Homodimer.

The protein localises to the cytoplasm. The catalysed reaction is (R)-pantoate + beta-alanine + ATP = (R)-pantothenate + AMP + diphosphate + H(+). It functions in the pathway cofactor biosynthesis; (R)-pantothenate biosynthesis; (R)-pantothenate from (R)-pantoate and beta-alanine: step 1/1. Its function is as follows. Catalyzes the condensation of pantoate with beta-alanine in an ATP-dependent reaction via a pantoyl-adenylate intermediate. In Staphylococcus aureus (strain Mu3 / ATCC 700698), this protein is Pantothenate synthetase.